A 466-amino-acid chain; its full sequence is Soluble pyridine nucleotide transhydrogenase (466 aa).

36-45 (ERYQNVGGGC) contributes to the FAD binding site.

This sequence belongs to the class-I pyridine nucleotide-disulfide oxidoreductase family. Homooligomer; probable homooctamer. The cofactor is FAD.

It localises to the cytoplasm. It carries out the reaction NAD(+) + NADPH = NADH + NADP(+). Its function is as follows. Conversion of NADPH, generated by peripheral catabolic pathways, to NADH, which can enter the respiratory chain for energy generation. The protein is Soluble pyridine nucleotide transhydrogenase of Escherichia coli O6:H1 (strain CFT073 / ATCC 700928 / UPEC).